The primary structure comprises 74 residues: Cecropin-P2 (74 aa).

Positions 1–13 are cleaved as a signal peptide; the sequence is MIFIYLLVQTAES. Positions 45-74 are cleaved as a propeptide — removed in mature form; sequence RRRFVVQQDTISPRLEVDERFLPNSVQEQI.

This sequence belongs to the cecropin family. Expressed in the body wall, intestine, uterus and ovary.

It is found in the secreted. Its function is as follows. Has antibacterial activity against several Gram-positive and Gram-negative bacteria. Is weakly active against yeasts. Acts by a nonpore mechanism. The polypeptide is Cecropin-P2 (ASCEC-2) (Ascaris suum (Pig roundworm)).